A 428-amino-acid chain; its full sequence is MKIYKLQTPVNTILENIAADKSISHRFAIFSLLTQGENKARNYLLAQDTLNTLEIIKNLGAKIEQKDSCVKIIPPKEILSPNCILDCGNSGTAMRLMIGFLAGISGFFVLSGDKFLNNRPMRRISKPLTQIGARIYGRNEANLAPLCIEGQNLKAFNYKSEISSAQVKTAMILSAFRADNICTFSEISLSRNHSENMLKAMKAPMRVSNDGLNLEISPLKKPLKAQNIIIPNDPSSAFYFALAAIILPKSQIILKNILLNPTRIEAYKILQKMGAKLEMTITQNDFETIGEIRVESSKLNGIEVKDNIAWLIDEAPALAIAFALAKGKSNLVNAKELRVKESDRIAVMVENLKLCGVEAKEFDDGFEIEGGCELKSSKIKSYGDHRIAMSFAILGLLCGIEIDDSDCIKTSFPNFIEILSNLGARIDY.

Lys-21, Ser-22, and Arg-26 together coordinate 3-phosphoshikimate. Lys-21 lines the phosphoenolpyruvate pocket. Gly-91 and Arg-119 together coordinate phosphoenolpyruvate. 3-phosphoshikimate-binding residues include Ser-164, Gln-166, Asp-313, and Lys-340. Residue Gln-166 coordinates phosphoenolpyruvate. The active-site Proton acceptor is the Asp-313. The phosphoenolpyruvate site is built by Arg-344 and Arg-386.

Belongs to the EPSP synthase family. Monomer.

Its subcellular location is the cytoplasm. The enzyme catalyses 3-phosphoshikimate + phosphoenolpyruvate = 5-O-(1-carboxyvinyl)-3-phosphoshikimate + phosphate. The protein operates within metabolic intermediate biosynthesis; chorismate biosynthesis; chorismate from D-erythrose 4-phosphate and phosphoenolpyruvate: step 6/7. Its function is as follows. Catalyzes the transfer of the enolpyruvyl moiety of phosphoenolpyruvate (PEP) to the 5-hydroxyl of shikimate-3-phosphate (S3P) to produce enolpyruvyl shikimate-3-phosphate and inorganic phosphate. The polypeptide is 3-phosphoshikimate 1-carboxyvinyltransferase (Campylobacter jejuni subsp. doylei (strain ATCC BAA-1458 / RM4099 / 269.97)).